The sequence spans 393 residues: Staphopain B (393 aa).

A signal peptide spans 1 to 36 (MNSSCKTRVFNIISIIMVSMLILSLGAFANNNKAKA). Residues 37–219 (DSHSKQLEIN…KVEENEAIQE (183 aa)) constitute a propeptide that is removed on maturation. Residues Cys-243, His-340, and Asn-360 contribute to the active site.

Belongs to the peptidase C47 family. In terms of assembly, in the cytoplasm, prematurely activated/folded SspB forms a stable non-covalent complex with SspC. Post-translationally, proteolytically cleaved by staphylococcal serine protease (SspA).

It localises to the secreted. Prematurely activated/folded staphopain B is inhibited by staphostatin B (SspC), which is probably required to protect staphylococcal cytoplasmic proteins from degradation by SspB. Functionally, cysteine protease that plays an important role in the inhibition of host innate immune response. Degrades host elastin, fibrogen, fibronectin and kininogen. Blocks phagocytosis of opsonised S.aureus by neutrophils and monocytes by inducing their death in a proteolytic activity-dependent manner. Decreases surface expression of the 'don't eat me' signal CD31 on neutrophils. Cleaves host galectin-3/LGALS3, thereby inhibiting the neutrophil-activating ability of the lectin. This Staphylococcus aureus protein is Staphopain B (sspB).